Reading from the N-terminus, the 100-residue chain is NADH-quinone oxidoreductase subunit K (100 aa).

Helical transmembrane passes span 4-24 (TSYY…GVLI), 29-49 (LVLF…LVTF), and 60-80 (IVVF…LALL).

Belongs to the complex I subunit 4L family. As to quaternary structure, NDH-1 is composed of 14 different subunits. Subunits NuoA, H, J, K, L, M, N constitute the membrane sector of the complex.

Its subcellular location is the cell membrane. It catalyses the reaction a quinone + NADH + 5 H(+)(in) = a quinol + NAD(+) + 4 H(+)(out). Its function is as follows. NDH-1 shuttles electrons from NADH, via FMN and iron-sulfur (Fe-S) centers, to quinones in the respiratory chain. The immediate electron acceptor for the enzyme in this species is believed to be ubiquinone. Couples the redox reaction to proton translocation (for every two electrons transferred, four hydrogen ions are translocated across the cytoplasmic membrane), and thus conserves the redox energy in a proton gradient. This Roseiflexus sp. (strain RS-1) protein is NADH-quinone oxidoreductase subunit K.